A 416-amino-acid chain; its full sequence is Phosphoglycerate kinase 2 (416 aa).

Substrate is bound by residues 28–30, R44, 65–68, R122, and R162; these read DMN and HQSR. Residues E337 and 362–365 each bind ATP; that span reads GGHI.

It belongs to the phosphoglycerate kinase family. In terms of assembly, monomer.

Its subcellular location is the cytoplasm. The catalysed reaction is (2R)-3-phosphoglycerate + ATP = (2R)-3-phospho-glyceroyl phosphate + ADP. It functions in the pathway carbohydrate degradation; glycolysis; pyruvate from D-glyceraldehyde 3-phosphate: step 2/5. This chain is Phosphoglycerate kinase 2, found in Methanosarcina acetivorans (strain ATCC 35395 / DSM 2834 / JCM 12185 / C2A).